Here is a 397-residue protein sequence, read N- to C-terminus: Tryptophan synthase beta chain (397 aa).

The residue at position 87 (Lys-87) is an N6-(pyridoxal phosphate)lysine.

Belongs to the TrpB family. In terms of assembly, tetramer of two alpha and two beta chains. Pyridoxal 5'-phosphate serves as cofactor.

It carries out the reaction (1S,2R)-1-C-(indol-3-yl)glycerol 3-phosphate + L-serine = D-glyceraldehyde 3-phosphate + L-tryptophan + H2O. It functions in the pathway amino-acid biosynthesis; L-tryptophan biosynthesis; L-tryptophan from chorismate: step 5/5. The beta subunit is responsible for the synthesis of L-tryptophan from indole and L-serine. This Enterobacter sp. (strain 638) protein is Tryptophan synthase beta chain.